A 421-amino-acid chain; its full sequence is UDP-N-acetylglucosamine 1-carboxyvinyltransferase (421 aa).

22–23 provides a ligand contact to phosphoenolpyruvate; sequence KN. A UDP-N-acetyl-alpha-D-glucosamine-binding site is contributed by Arg-93. Cys-117 functions as the Proton donor in the catalytic mechanism. Cys-117 is modified (2-(S-cysteinyl)pyruvic acid O-phosphothioketal). Residues 122 to 126, Asp-308, and Ile-330 contribute to the UDP-N-acetyl-alpha-D-glucosamine site; that span reads RPVDL.

Belongs to the EPSP synthase family. MurA subfamily.

Its subcellular location is the cytoplasm. It catalyses the reaction phosphoenolpyruvate + UDP-N-acetyl-alpha-D-glucosamine = UDP-N-acetyl-3-O-(1-carboxyvinyl)-alpha-D-glucosamine + phosphate. Its pathway is cell wall biogenesis; peptidoglycan biosynthesis. Cell wall formation. Adds enolpyruvyl to UDP-N-acetylglucosamine. This chain is UDP-N-acetylglucosamine 1-carboxyvinyltransferase, found in Pseudomonas putida (strain GB-1).